We begin with the raw amino-acid sequence, 389 residues long: Equilibrative nucleotide transporter 8 (389 aa).

The next 10 membrane-spanning stretches (helical) occupy residues 19-39, 57-77, 87-107, 119-139, 150-170, 187-207, 238-258, 266-286, 331-351, and 367-387; these read VAYV…NALI, TFTV…MTWN, NLGF…DWVW, LMVG…GSLI, MQAI…LRIA, HSYF…CNVL, WPAS…PGFI, LLQS…DFVG, VVVL…VLMI, and IFMV…GWLW.

The protein belongs to the SLC29A/ENT transporter (TC 2.A.57) family. As to expression, expressed in stems, flowers and siliques.

It localises to the cell membrane. Functionally, may be involved in nucleoside transport. This chain is Equilibrative nucleotide transporter 8 (ETN8), found in Arabidopsis thaliana (Mouse-ear cress).